Here is a 308-residue protein sequence, read N- to C-terminus: UDP-N-acetylenolpyruvoylglucosamine reductase 2 (308 aa).

Positions 31 to 197 (RIGGPADYLV…AEVVMALRPA (167 aa)) constitute an FAD-binding PCMH-type domain. R176 is an active-site residue. S226 (proton donor) is an active-site residue. E296 is a catalytic residue.

This sequence belongs to the MurB family. FAD serves as cofactor.

Its subcellular location is the cytoplasm. The enzyme catalyses UDP-N-acetyl-alpha-D-muramate + NADP(+) = UDP-N-acetyl-3-O-(1-carboxyvinyl)-alpha-D-glucosamine + NADPH + H(+). It participates in cell wall biogenesis; peptidoglycan biosynthesis. Cell wall formation. This chain is UDP-N-acetylenolpyruvoylglucosamine reductase 2, found in Symbiobacterium thermophilum (strain DSM 24528 / JCM 14929 / IAM 14863 / T).